The sequence spans 803 residues: Volume-regulated anion channel subunit LRRC8C (803 aa).

Topologically, residues 1–22 (MIPVTEFRQFSEQQPAFRVLKP) are cytoplasmic. A helical membrane pass occupies residues 23–47 (WWDVFTDYLSVAMLMIGVFGCTLQV). The Extracellular portion of the chain corresponds to 48–124 (MQDKIICLPK…CYERALHWYA (77 aa)). 2 disulfides stabilise this stretch: Cys-54/Cys-308 and Cys-115/Cys-293. 2 N-linked (GlcNAc...) asparagine glycosylation sites follow: Asn-64 and Asn-70. A helical membrane pass occupies residues 125–144 (KYFPYLVLIHTLVFMLCSNF). Residues 145-262 (WFKFPGSSSK…EEGDILYAMY (118 aa)) are Cytoplasmic-facing. Residues 177-209 (EVSGEDSEEKDNRKNNMNRSNTIQSGPEDSLVN) form a disordered region. Residues 191 to 209 (NNMNRSNTIQSGPEDSLVN) show a composition bias toward polar residues. 2 positions are modified to phosphoserine: Ser-212 and Ser-215. A helical transmembrane segment spans residues 263 to 284 (VRQTVLKVIKFLIIIAYNSALV). Topologically, residues 285-314 (SKVQFTVDCNVDIQDMTGYKNFSCNHTMAH) are extracellular. The chain crosses the membrane as a helical span at residues 315-339 (LFSKLSFCYLCFVSIYGLTCLYTLY). The Cytoplasmic segment spans residues 340 to 803 (WLFYRSLREY…SDVREQMKTE (464 aa)). LRR repeat units follow at residues 397 to 420 (ENKL…KLQT), 421 to 443 (NAHN…VFEI), 446 to 466 (LQSL…IAQL), 467 to 488 (DNLQ…ALSF), 490 to 513 (KENL…MYGL), 515 to 537 (NLEE…TLES), 541 to 563 (LKSL…VVDV), 565 to 587 (SHLQ…NLKK), 588 to 611 (MTNL…VFSL), 613 to 635 (SLQE…SFQH), 636 to 659 (LRKL…IKKL), 660 to 682 (TSLE…LFLC), 684 to 705 (KIRY…IGVL), 706 to 728 (QSLQ…LYFC), 730 to 751 (KLKT…IGNL), 753 to 774 (FLSY…LGDC), and 776 to 799 (ALKR…VREQ).

Belongs to the LRRC8 family. Heterohexamer; oligomerizes with other LRRC8 proteins (LRRC8A, LRRC8B, LRRC8D and/or LRRC8E) to form a heterohexamer. Homoheptamer; inactive, likely because it is not targeted to the plasma membrane in the absence of LRRC8A. In vivo, the subunit composition may depend primarily on expression levels, and heterooligomeric channels containing various proportions of the different LRRC8 proteins may coexist. In terms of tissue distribution, expressed at highest levels in skeletal muscle, and at moderate levels in heart, lung and peripheral blood leukocytes.

The protein localises to the cell membrane. The protein resides in the endoplasmic reticulum membrane. It carries out the reaction chloride(in) = chloride(out). The enzyme catalyses iodide(out) = iodide(in). The catalysed reaction is taurine(out) = taurine(in). It catalyses the reaction 2',3'-cGAMP(out) = 2',3'-cGAMP(in). Non-essential component of the volume-regulated anion channel (VRAC, also named VSOAC channel), an anion channel required to maintain a constant cell volume in response to extracellular or intracellular osmotic changes. The VRAC channel conducts iodide better than chloride and can also conduct organic osmolytes like taurine. Plays a redundant role in the efflux of amino acids, such as aspartate and glutamate, in response to osmotic stress. The VRAC channel also mediates transport of immunoreactive cyclic dinucleotide GMP-AMP (2'-3'-cGAMP), an immune messenger produced in response to DNA virus in the cytosol. Channel activity requires LRRC8A plus at least one other family member (LRRC8B, LRRC8C, LRRC8D or LRRC8E); channel characteristics depend on the precise subunit composition. The protein is Volume-regulated anion channel subunit LRRC8C of Homo sapiens (Human).